The sequence spans 803 residues: Phosphoribosylformylglycinamidine synthase subunit PurL (803 aa).

His65 is an active-site residue. Tyr68 and Lys107 together coordinate ATP. Residue Glu109 coordinates Mg(2+). Residues Ser110–His113 and Arg132 each bind substrate. Residue His111 is the Proton acceptor of the active site. Position 133 (Asp133) interacts with Mg(2+). Substrate is bound at residue Gln256. Asp284 provides a ligand contact to Mg(2+). Glu328–Gln330 contributes to the substrate binding site. Residues Asn537 and Gly574 each coordinate ATP. Asn575 lines the Mg(2+) pocket. Residue Ser577 coordinates substrate.

It belongs to the FGAMS family. As to quaternary structure, monomer. Part of the FGAM synthase complex composed of 1 PurL, 1 PurQ and 2 PurS subunits.

Its subcellular location is the cytoplasm. The catalysed reaction is N(2)-formyl-N(1)-(5-phospho-beta-D-ribosyl)glycinamide + L-glutamine + ATP + H2O = 2-formamido-N(1)-(5-O-phospho-beta-D-ribosyl)acetamidine + L-glutamate + ADP + phosphate + H(+). It functions in the pathway purine metabolism; IMP biosynthesis via de novo pathway; 5-amino-1-(5-phospho-D-ribosyl)imidazole from N(2)-formyl-N(1)-(5-phospho-D-ribosyl)glycinamide: step 1/2. Part of the phosphoribosylformylglycinamidine synthase complex involved in the purines biosynthetic pathway. Catalyzes the ATP-dependent conversion of formylglycinamide ribonucleotide (FGAR) and glutamine to yield formylglycinamidine ribonucleotide (FGAM) and glutamate. The FGAM synthase complex is composed of three subunits. PurQ produces an ammonia molecule by converting glutamine to glutamate. PurL transfers the ammonia molecule to FGAR to form FGAM in an ATP-dependent manner. PurS interacts with PurQ and PurL and is thought to assist in the transfer of the ammonia molecule from PurQ to PurL. The protein is Phosphoribosylformylglycinamidine synthase subunit PurL of Prochlorococcus marinus (strain NATL1A).